The primary structure comprises 344 residues: Bifunctional trans-3-hydroxy-L-proline dehydratase/2-epimerase (344 aa).

S90 functions as the Proton acceptor in the catalytic mechanism. Substrate contacts are provided by residues 91 to 92 (GS), D252, and 257 to 258 (GT).

This sequence belongs to the proline racemase family.

The enzyme catalyses trans-3-hydroxy-L-proline = 1-pyrroline-2-carboxylate + H2O. It carries out the reaction trans-3-hydroxy-L-proline = cis-3-hydroxy-D-proline. Its function is as follows. Bifunctional enzyme catalyzing both the dehydration of trans-3-hydroxy-L-proline (t3LHyp) to Delta(1)-pyrroline-2-carboxylate (Pyr2C) and 2-epimerization of t3LHyp to cis-3-hydroxy-D-proline (c3DHyp). No dehydratase activity with L-proline, trans-4-hydroxy-L-proline (t4LHyp), cis-4-hydroxy-L-proline (c4LHyp), D-proline, cis-4-hydroxy-D-proline (c4DHyp), trans-4-hydroxy-D-proline (t4DHyp) or L-serine as substrates. Displays neither t4LHyp epimerase nor proline racemase activity. Is likely involved in a degradation pathway that converts t3LHyp to L-proline, which would allow P.aeruginosa to grow on t3LHyp as a sole carbon source. The polypeptide is Bifunctional trans-3-hydroxy-L-proline dehydratase/2-epimerase (Pseudomonas aeruginosa (strain ATCC 15692 / DSM 22644 / CIP 104116 / JCM 14847 / LMG 12228 / 1C / PRS 101 / PAO1)).